The chain runs to 441 residues: Eukaryotic translation initiation factor 3 subunit E (441 aa).

A PCI domain is found at 223 to 407; the sequence is IFFNHDNGRT…GTVIMEPTQP (185 aa).

This sequence belongs to the eIF-3 subunit E family. As to quaternary structure, component of the eukaryotic translation initiation factor 3 (eIF-3) complex (Potential). Binds to the translation initiation factors TIF3F1 and TIF3H1. Associates with the CSN (COP9 signalosome) complex. Interacts directly with CSN1, CSN4, CSN6A, CSN6B, CSN7, CSN8 and TIF3C1. Binds to 40S small ribosomal subunit S9 (RPS9B and RPS9C) via its N-terminal part. Interacts with the 26S proteasome subunit RPN12a via its C-terminal part. Also binds with At1g27930 and At4g30620.

Its subcellular location is the cytoplasm. The protein localises to the nucleus. Functionally, component of the eukaryotic translation initiation factor 3 (eIF-3) complex, which is involved in protein synthesis of a specialized repertoire of mRNAs and, together with other initiation factors, stimulates binding of mRNA and methionyl-tRNAi to the 40S ribosome. The eIF-3 complex specifically targets and initiates translation of a subset of mRNAs involved in cell proliferation (Potential). Negatively regulates translation during flower development. This chain is Eukaryotic translation initiation factor 3 subunit E, found in Arabidopsis thaliana (Mouse-ear cress).